The chain runs to 870 residues: Probable coatomer subunit gamma (870 aa).

HEAT repeat units follow at residues 60–97 (TEAT…VSDD), 99–133 (IIVT…TGML), 168–205 (EVVR…NDRL), 278–315 (SEIQ…AHPN), 316–350 (AVMS…GAES), and 389–425 (HTVM…ENPD).

Belongs to the COPG family. Oligomeric complex that consists of at least the alpha, beta, beta', gamma, delta, epsilon and zeta subunits.

The protein resides in the cytoplasm. It is found in the golgi apparatus membrane. The protein localises to the cytoplasmic vesicle. Its subcellular location is the COPI-coated vesicle membrane. The coatomer is a cytosolic protein complex that binds to dilysine motifs and reversibly associates with Golgi non-clathrin-coated vesicles, which further mediate biosynthetic protein transport from the ER, via the Golgi up to the trans Golgi network. Coatomer complex is required for budding from Golgi membranes, and is essential for the retrograde Golgi-to-ER transport of dilysine-tagged proteins. This chain is Probable coatomer subunit gamma, found in Caenorhabditis elegans.